The primary structure comprises 127 residues: Protein LLP homolog (127 aa).

The span at 1–21 shows a compositional bias: basic residues; that stretch reads MAKSLRSKWKRKMRAEKRKKN. The interval 1-24 is disordered; sequence MAKSLRSKWKRKMRAEKRKKNAPK. Residues lysine 65 and lysine 72 each participate in a glycyl lysine isopeptide (Lys-Gly) (interchain with G-Cter in SUMO2) cross-link. Over residues 98–120 the composition is skewed to basic residues; that stretch reads RQRKRLKAKRERKKGKSKVKAMK. Positions 98-127 are disordered; sequence RQRKRLKAKRERKKGKSKVKAMKAAKGLTW.

It belongs to the learning-associated protein family. As to quaternary structure, interacts with CTCF, MYO1C and with the transcriptional machinery, including RNA polymerase II and TBP.

The protein localises to the nucleus. It is found in the nucleolus. It localises to the chromosome. In terms of biological role, in hippocampal neurons, regulates dendritic and spine growth and synaptic transmission. The chain is Protein LLP homolog (LLPH) from Bos taurus (Bovine).